The following is a 173-amino-acid chain: C-type lectin mosGCTL-7 (173 aa).

A signal peptide spans 1 to 24 (MVVGWSLLGWALSWLAVATVVVSA). The C-type lectin domain occupies 51-167 (NWFKATEYCH…CWDEYYFVCE (117 aa)). Disulfide bonds link cysteine 59-cysteine 166 and cysteine 139-cysteine 158. 2 N-linked (GlcNAc...) asparagine glycosylation sites follow: asparagine 119 and asparagine 144.

In terms of assembly, interacts with putative receptor-type tyrosine-protein phosphatase mosPTP-1; the interaction may mediate the recruitment of Japanese encephalitis virus particles in complex with C-type lectin mosGCTL-7 to the cell surface.

The protein localises to the secreted. In terms of biological role, carbohydrate-binding protein. Its function is as follows. (Microbial infection) Facilitates Japanese encephalitis virus infection in mosquitoes. The chain is C-type lectin mosGCTL-7 from Culex quinquefasciatus (Southern house mosquito).